Consider the following 248-residue polypeptide: Cobalt transport protein CbiM (248 aa).

A signal peptide spans 1–29 (MKRVSVKNYLVCLLIAVCAIFVFPANASA). Helical transmembrane passes span 40–60 (GWCI…FFSI), 72–92 (TLLA…MPSV), 104–124 (LGAV…ILLF), 136–156 (TLGA…FGVF), 167–187 (GLAV…ITSV), and 210–230 (IFGF…VVIY).

It belongs to the CbiM family. As to quaternary structure, forms an energy-coupling factor (ECF) transporter complex composed of an ATP-binding protein (A component, CbiO), a transmembrane protein (T component, CbiQ) and 2 possible substrate-capture proteins (S components, CbiM and CbiN) of unknown stoichimetry.

It is found in the cell membrane. Its pathway is cofactor biosynthesis; adenosylcobalamin biosynthesis. Its function is as follows. Part of the energy-coupling factor (ECF) transporter complex CbiMNOQ involved in cobalt import. This is Cobalt transport protein CbiM from Ruminiclostridium cellulolyticum (strain ATCC 35319 / DSM 5812 / JCM 6584 / H10) (Clostridium cellulolyticum).